We begin with the raw amino-acid sequence, 964 residues long: Probable outer membrane protein PmpE (964 aa).

The first 18 residues, 1–18 (MKKAFFFFLIGNSLSGLA), serve as a signal peptide directing secretion. Positions 683–964 (LTPSGHPFWG…YLNGEIALRF (282 aa)) constitute an Autotransporter domain.

It belongs to the PMP outer membrane protein family.

The protein resides in the secreted. It localises to the cell wall. It is found in the cell outer membrane. The chain is Probable outer membrane protein PmpE (pmpE) from Chlamydia trachomatis serovar D (strain ATCC VR-885 / DSM 19411 / UW-3/Cx).